The following is a 273-amino-acid chain: Undecaprenyl-diphosphatase (273 aa).

A run of 7 helical transmembrane segments spans residues 13–35 (GLVE…VFGN), 45–62 (VFEI…VFEY), 82–102 (FVLN…LFGK), 108–128 (LFNP…ILWV), 186–206 (TEFS…YDVL), 219–239 (LILI…KALL), and 250–270 (FAYY…SGWI).

This sequence belongs to the UppP family.

Its subcellular location is the cell inner membrane. It catalyses the reaction di-trans,octa-cis-undecaprenyl diphosphate + H2O = di-trans,octa-cis-undecaprenyl phosphate + phosphate + H(+). Functionally, catalyzes the dephosphorylation of undecaprenyl diphosphate (UPP). Confers resistance to bacitracin. This Neisseria meningitidis serogroup A / serotype 4A (strain DSM 15465 / Z2491) protein is Undecaprenyl-diphosphatase.